Here is a 392-residue protein sequence, read N- to C-terminus: MGVVTKKILILGSTGSIGTQALDVIADNSDKFEVVGIAAGGSQPDLVISQAQQLGLAADKVAVADAQAAAVISKALGGEIISGTDAAKILVETTKADTVLNALVGSLGLAATLATLESGAHLALANKESLVAGGEFVTSKAKLGQIIPVDSEHSAMAQCLRSGTRDEVARIVLTASGGPFRGWTREKMWEVTPEQAAAHPTWAMGQMNTLNSATLINKGLELIEATLLFETDADLIDVTVHPQSIIHSMITFTDGATIAQASPPSMKLPIALALDWPHRVPKAQPALDFTAAHTWAFEPVDDAAFPAVQLARHVAKQKGTYPAVYNAANEEAAEAFLRGRIKFPQIVDVVDEVLQGASQFAGVASHVDDILATESEARARANALINRLATNL.

Positions 14, 15, 16, 17, 40, 43, and 126 each coordinate NADPH. K127 is a 1-deoxy-D-xylulose 5-phosphate binding site. Position 128 (E128) interacts with NADPH. D150 is a binding site for Mn(2+). Residues S151, E152, S176, and H199 each coordinate 1-deoxy-D-xylulose 5-phosphate. E152 serves as a coordination point for Mn(2+). Position 205 (G205) interacts with NADPH. The 1-deoxy-D-xylulose 5-phosphate site is built by S212, N217, K218, and E221. Mn(2+) is bound at residue E221.

The protein belongs to the DXR family. The cofactor is Mg(2+). Requires Mn(2+) as cofactor.

It carries out the reaction 2-C-methyl-D-erythritol 4-phosphate + NADP(+) = 1-deoxy-D-xylulose 5-phosphate + NADPH + H(+). It participates in isoprenoid biosynthesis; isopentenyl diphosphate biosynthesis via DXP pathway; isopentenyl diphosphate from 1-deoxy-D-xylulose 5-phosphate: step 1/6. In terms of biological role, catalyzes the NADPH-dependent rearrangement and reduction of 1-deoxy-D-xylulose-5-phosphate (DXP) to 2-C-methyl-D-erythritol 4-phosphate (MEP). The sequence is that of 1-deoxy-D-xylulose 5-phosphate reductoisomerase from Corynebacterium glutamicum (strain ATCC 13032 / DSM 20300 / JCM 1318 / BCRC 11384 / CCUG 27702 / LMG 3730 / NBRC 12168 / NCIMB 10025 / NRRL B-2784 / 534).